The primary structure comprises 403 residues: Phosphoglycerate kinase (403 aa).

Substrate-binding positions include 24–26 (DLN), R39, 62–65 (HLGR), R121, and R161. Residues K211, G299, E330, and 359–362 (GGDS) each bind ATP.

This sequence belongs to the phosphoglycerate kinase family. Monomer.

The protein resides in the cytoplasm. The catalysed reaction is (2R)-3-phosphoglycerate + ATP = (2R)-3-phospho-glyceroyl phosphate + ADP. Its pathway is carbohydrate degradation; glycolysis; pyruvate from D-glyceraldehyde 3-phosphate: step 2/5. The chain is Phosphoglycerate kinase from Corynebacterium kroppenstedtii (strain DSM 44385 / JCM 11950 / CIP 105744 / CCUG 35717).